A 589-amino-acid polypeptide reads, in one-letter code: Proline--tRNA ligase (589 aa).

It belongs to the class-II aminoacyl-tRNA synthetase family. ProS type 1 subfamily. As to quaternary structure, homodimer.

It localises to the cytoplasm. It carries out the reaction tRNA(Pro) + L-proline + ATP = L-prolyl-tRNA(Pro) + AMP + diphosphate. Its function is as follows. Catalyzes the attachment of proline to tRNA(Pro) in a two-step reaction: proline is first activated by ATP to form Pro-AMP and then transferred to the acceptor end of tRNA(Pro). As ProRS can inadvertently accommodate and process non-cognate amino acids such as alanine and cysteine, to avoid such errors it has two additional distinct editing activities against alanine. One activity is designated as 'pretransfer' editing and involves the tRNA(Pro)-independent hydrolysis of activated Ala-AMP. The other activity is designated 'posttransfer' editing and involves deacylation of mischarged Ala-tRNA(Pro). The misacylated Cys-tRNA(Pro) is not edited by ProRS. The chain is Proline--tRNA ligase from Corynebacterium aurimucosum (strain ATCC 700975 / DSM 44827 / CIP 107346 / CN-1) (Corynebacterium nigricans).